A 197-amino-acid chain; its full sequence is Protein lin-7 homolog C (197 aa).

N-acetylalanine is present on alanine 2. A Kinase interacting site motif is present at residues 2 to 13; the sequence is AALGEPVRLERD. Positions 10-65 constitute an L27 domain; sequence LERDICRAIELLEKLQRSGEVPPQKLQALQRVLQSEFCNAVREVYEHVYETVDISS. The PDZ domain maps to 93-175; it reads VVELPKTEEG…KVKLVVRYTP (83 aa).

The protein belongs to the lin-7 family. Forms a complex with CASK and APBA1 or CASKIN1. Component of the brain-specific heterotrimeric complex (LIN-10-LIN-2-LIN-7 complex) composed of at least APBA1, CASK, and LIN7, which associates with the motor protein KIF17 to transport vesicles along microtubules. Can also interact with other modular proteins containing protein-protein interaction domains like PALS1, PALS2, MPP7, DLG1, DLG2 and DLG3 through its L27 domain. Interacts with DLG4 and GRIN2B as well as CDH1 and CTNNB1, the channels KCNJ12/Kir2.2, KCNJ4/Kir2.3 and probably KCNJ2/Kir2.1 and SLC6A12/BGT-1 via its PDZ domain. The association of LIN7A with cadherin and beta-catenin is calcium-dependent, occurs at synaptic junctions and requires the actin cytoskeleton. Interacts with EGFR, ERBB2, ERBB3 and ERBB4 with both PDZ and KID domains. Associates with KIF17 via APBA1. Interacts with HTR4. Forms a tripartite complex composed of DLG1, MPP7 and LIN7 (LIN7A or LIN7C). Interacts with MAPK12.

It localises to the cell membrane. The protein resides in the basolateral cell membrane. The protein localises to the cell junction. Its subcellular location is the postsynaptic density membrane. It is found in the tight junction. It localises to the synapse. The protein resides in the synaptosome. In terms of biological role, plays a role in establishing and maintaining the asymmetric distribution of channels and receptors at the plasma membrane of polarized cells. Forms membrane-associated multiprotein complexes that may regulate delivery and recycling of proteins to the correct membrane domains. The tripartite complex composed of LIN7 (LIN7A, LIN7B or LIN7C), CASK and APBA1 associates with the motor protein KIF17 to transport vesicles containing N-methyl-D-aspartate (NMDA) receptor subunit NR2B along microtubules. This complex may have the potential to couple synaptic vesicle exocytosis to cell adhesion in brain. Ensures the proper localization of GRIN2B (subunit 2B of the NMDA receptor) to neuronal postsynaptic density and may function in localizing synaptic vesicles at synapses where it is recruited by beta-catenin and cadherin. Required to localize Kir2 channels, GABA transporter (SLC6A12) and EGFR/ERBB1, ERBB2, ERBB3 and ERBB4 to the basolateral membrane of epithelial cells. The chain is Protein lin-7 homolog C (LIN7C) from Bos taurus (Bovine).